The following is a 259-amino-acid chain: 2,3-dihydroxy-2,3-dihydro-p-cumate dehydrogenase (259 aa).

18 to 42 (VTGGAHGIGLGIVERLLGLGARVTA) is an NAD(+) binding site. The Proton acceptor role is filled by Y163.

Belongs to the short-chain dehydrogenases/reductases (SDR) family.

It catalyses the reaction (2R,3S)-2,3-dihydroxy-2,3-dihydro-p-cumate + NAD(+) = 2,3-dihydroxy-p-cumate + NADH + H(+). It participates in aromatic compound metabolism; p-cumate degradation; acetaldehyde and pyruvate from p-cumate: step 2/7. The protein is 2,3-dihydroxy-2,3-dihydro-p-cumate dehydrogenase (cmtB) of Pseudomonas putida (strain ATCC 700007 / DSM 6899 / JCM 31910 / BCRC 17059 / LMG 24140 / F1).